A 200-amino-acid chain; its full sequence is Small ribosomal subunit protein uS4 (200 aa).

A disordered region spans residues 20 to 41 (TGTGKELDKRPYAPGQHGPNQR). An S4 RNA-binding domain is found at 92–152 (SRLDNLVYRL…EKSKNLDVVK (61 aa)).

It belongs to the universal ribosomal protein uS4 family. As to quaternary structure, part of the 30S ribosomal subunit. Contacts protein S5. The interaction surface between S4 and S5 is involved in control of translational fidelity.

Functionally, one of the primary rRNA binding proteins, it binds directly to 16S rRNA where it nucleates assembly of the body of the 30S subunit. Its function is as follows. With S5 and S12 plays an important role in translational accuracy. The chain is Small ribosomal subunit protein uS4 from Oceanobacillus iheyensis (strain DSM 14371 / CIP 107618 / JCM 11309 / KCTC 3954 / HTE831).